Consider the following 152-residue polypeptide: Protein Smg homolog (152 aa).

Belongs to the Smg family.

This is Protein Smg homolog from Chromobacterium violaceum (strain ATCC 12472 / DSM 30191 / JCM 1249 / CCUG 213 / NBRC 12614 / NCIMB 9131 / NCTC 9757 / MK).